We begin with the raw amino-acid sequence, 892 residues long: Alanine--tRNA ligase (892 aa).

Zn(2+) contacts are provided by histidine 594, histidine 598, cysteine 702, and histidine 706.

It belongs to the class-II aminoacyl-tRNA synthetase family. Zn(2+) serves as cofactor.

The protein resides in the cytoplasm. The catalysed reaction is tRNA(Ala) + L-alanine + ATP = L-alanyl-tRNA(Ala) + AMP + diphosphate. In terms of biological role, catalyzes the attachment of alanine to tRNA(Ala) in a two-step reaction: alanine is first activated by ATP to form Ala-AMP and then transferred to the acceptor end of tRNA(Ala). Also edits incorrectly charged Ser-tRNA(Ala) and Gly-tRNA(Ala) via its editing domain. This chain is Alanine--tRNA ligase, found in Pyrobaculum neutrophilum (strain DSM 2338 / JCM 9278 / NBRC 100436 / V24Sta) (Thermoproteus neutrophilus).